A 391-amino-acid chain; its full sequence is Capsule polysaccharide export outer membrane protein CtrA (391 aa).

Residues 1-22 form the signal peptide; sequence MFKVKFYIRHAVLLLCGSLIVG. C23 carries N-palmitoyl cysteine lipidation. C23 carries S-diacylglycerol cysteine lipidation. At 23 to 33 the chain is on the periplasmic side; the sequence is CSAIPSSGPSA. Residues 34-43 traverse the membrane as a beta stranded segment; that stretch reads KKIVSLGQQS. At 44 to 57 the chain is on the extracellular side; that stretch reads EVQIPEVELIDVNH. The beta stranded transmembrane segment at 58–67 threads the bilayer; it reads TVAQLLYKAQ. The Periplasmic portion of the chain corresponds to 68–83; the sequence is INQSFTQFGDGYASAG. Residues 84–93 traverse the membrane as a beta stranded segment; the sequence is TLNIGDVLDI. Residues 94-117 lie on the Extracellular side of the membrane; sequence MIWEAPPAVLFGGGLSSMGSGSAH. A beta stranded membrane pass occupies residues 118–127; that stretch reads QTKLPEQLVT. Residues 128–135 lie on the Periplasmic side of the membrane; it reads ARGTVSVP. A beta stranded membrane pass occupies residues 136–145; that stretch reads FVGDISVVGK. Residues 146 to 148 lie on the Extracellular side of the membrane; that stretch reads TPG. The beta stranded transmembrane segment at 149-158 threads the bilayer; sequence QVQEIIKGRL. The Periplasmic segment spans residues 159-161; it reads KKM. Residues 162–171 form a beta stranded membrane-spanning segment; that stretch reads ANQPQVMVRL. At 172–178 the chain is on the extracellular side; the sequence is VQNNAAN. Residues 179 to 188 traverse the membrane as a beta stranded segment; that stretch reads VSVIRAGNSV. Topologically, residues 189 to 391 are periplasmic; that stretch reads RMPLTAAGER…GANSINNLTN (203 aa).

The protein belongs to the BexD/CtrA/VexA family.

The protein resides in the cell outer membrane. Its function is as follows. Involved in transport of capsular polysaccharides to the cell surface. May function as a membrane anchor for capsular polysaccharides. Possible porin properties. This Neisseria meningitidis serogroup B (strain ATCC BAA-335 / MC58) protein is Capsule polysaccharide export outer membrane protein CtrA (ctrA).